The sequence spans 89 residues: Putative protein T-ENOL (89 aa).

Disordered stretches follow at residues 1–31 (MAST…KASL) and 54–89 (RSHM…TDTR).

As to expression, specifically expressed in testis (at protein level).

This Rattus norvegicus (Rat) protein is Putative protein T-ENOL.